The sequence spans 202 residues: CASP-like protein 2B2 (202 aa).

The Cytoplasmic segment spans residues 1-29 (MSYLGVGVSPGNVPVYHGMNLKVIDRRVR). A helical transmembrane segment spans residues 30–50 (LAELVLRCVICALGVLAAVLV). Residues 51-72 (GTDTQVKEIFSIQKKARFTDMK) lie on the Extracellular side of the membrane. The chain crosses the membrane as a helical span at residues 73-93 (ALVFLVVANGIAAAYSLVQGV). The Cytoplasmic segment spans residues 94–118 (RCVVGMVKGSVLFSKPLAWVIFSGD). The helical transmembrane segment at 119–139 (QMMAYLTLSAVAAAVQSASFA) threads the bilayer. The Extracellular segment spans residues 140–164 (KLGQPDLQWMKICNMYGKFCNQVGE). The chain crosses the membrane as a helical span at residues 165–185 (GIASALLVSVSMVVLSCISSF). At 186-202 (SLFRLYGGNKGKDGARW) the chain is on the cytoplasmic side.

The protein belongs to the Casparian strip membrane proteins (CASP) family. As to quaternary structure, homodimer and heterodimers.

It is found in the cell membrane. This chain is CASP-like protein 2B2, found in Populus trichocarpa (Western balsam poplar).